The chain runs to 305 residues: Peroxisome biogenesis factor 2 (305 aa).

The Peroxisomal matrix segment spans residues 1-15; sequence MAAREESTQSANRVL. The chain crosses the membrane as a helical span at residues 16 to 42; that stretch reads RISQLDALELNKALEQLVWSQFTQCFH. Residues 43-48 are Cytoplasmic-facing; the sequence is GFKPGL. A helical membrane pass occupies residues 49–74; it reads LARFEPEVKAFLWLFLWRFTIYSKNA. At 75 to 98 the chain is on the peroxisomal matrix side; that stretch reads TVGQSVLNIQYKNDSSPNPVYQPP. A helical transmembrane segment spans residues 99–125; it reads SKNQKLLYAVCTIGGRWLEERCYDLFR. The Cytoplasmic segment spans residues 126–133; sequence NRHLASFG. Residues 134–160 traverse the membrane as a helical segment; that stretch reads KAKQCMNFVVGLLKLGELMNFLIFLQK. The Peroxisomal matrix portion of the chain corresponds to 161–187; sequence GKFATLTERLLGIHSVFCKPQSMREVG. The chain crosses the membrane as a helical span at residues 188-211; that stretch reads FEYMNRELLWHGFAEFLVFLLPLI. The Cytoplasmic segment spans residues 212–305; sequence NIQKLKAKLS…GIEMSEVNAL (94 aa). The Zn(2+) site is built by Cys-244, Cys-247, Cys-259, His-261, Cys-264, Cys-267, Cys-280, and Cys-283. An RING-type zinc finger spans residues 244–284; it reads CALCGEWPTMPHTIGCEHVFCYYCVKSSFLFDMYFTCPKCG.

This sequence belongs to the pex2/pex10/pex12 family. Component of the PEX2-PEX10-PEX12 retrotranslocation channel, composed of PEX2, PEX10 and PEX12. Post-translationally, forms intramolecular and intermolecular disulfide bonds in response to reactive oxygen species (ROS), promoting higher stability.

Its subcellular location is the peroxisome membrane. It catalyses the reaction [E2 ubiquitin-conjugating enzyme]-S-ubiquitinyl-L-cysteine + [acceptor protein]-L-cysteine = [E2 ubiquitin-conjugating enzyme]-L-cysteine + [acceptor protein]-S-ubiquitinyl-L-cysteine.. The catalysed reaction is S-ubiquitinyl-[E2 ubiquitin-conjugating enzyme]-L-cysteine + [acceptor protein]-L-lysine = [E2 ubiquitin-conjugating enzyme]-L-cysteine + N(6)-ubiquitinyl-[acceptor protein]-L-lysine.. The protein operates within protein modification; protein ubiquitination. Its function is as follows. E3 ubiquitin-protein ligase component of a retrotranslocation channel required for peroxisome organization by mediating export of the PEX5 receptor from peroxisomes to the cytosol, thereby promoting PEX5 recycling. The retrotranslocation channel is composed of PEX2, PEX10 and PEX12; each subunit contributing transmembrane segments that coassemble into an open channel that specifically allows the passage of PEX5 through the peroxisomal membrane. PEX2 also regulates peroxisome organization by acting as a E3 ubiquitin-protein ligase. PEX2 ubiquitinates PEX5 during its passage through the retrotranslocation channel: catalyzes monoubiquitination of PEX5 at 'Cys-11', a modification that acts as a signal for PEX5 extraction into the cytosol. Required for pexophagy in response to starvation by mediating ubiquitination of peroxisomal proteins, such as PEX5 and ABCD3/PMP70. Also involved in the response to reactive oxygen species (ROS) by mediating 'Lys-48'-linked polyubiquitination and subsequent degradation of PNPLA2/ATGL, thereby regulating lipolysis. This is Peroxisome biogenesis factor 2 (Pex2) from Rattus norvegicus (Rat).